A 550-amino-acid chain; its full sequence is Rhodopsin kinase grk7-b (550 aa).

The interval 22–45 is disordered; that stretch reads SSEGDAKELQKRRKSLSLPPPDVS. At Ser-36 the chain carries Phosphoserine. In terms of domain architecture, RGS spans 57 to 174; sequence YQSICVEQPI…QNSPFYDRFL (118 aa). Residues 189–451 enclose the Protein kinase domain; that stretch reads FYEFRILGKG…DDDPRKHAFF (263 aa). ATP is bound by residues 195–203 and Lys-218; that span reads LGKGGFGEV. Asp-314 serves as the catalytic Proton acceptor. The AGC-kinase C-terminal domain occupies 452–517; it reads KSINFQRLEA…GAVPISWQKE (66 aa). Position 487 is a phosphoserine (Ser-487). The tract at residues 531–550 is disordered; it reads SREVTGGGNSGEKSGVCSIL. The residue at position 547 (Cys-547) is a Cysteine methyl ester. A lipid anchor (S-geranylgeranyl cysteine) is attached at Cys-547. Positions 548–550 are cleaved as a propeptide — removed in mature form; sequence SIL.

Belongs to the protein kinase superfamily. AGC Ser/Thr protein kinase family. GPRK subfamily. Post-translationally, autophosphorylated in vitro at Ser-487. Phosphorylation at Ser-36 is regulated by light and activated by cAMP. In terms of tissue distribution, retina, cones.

It is found in the membrane. The catalysed reaction is L-threonyl-[rhodopsin] + ATP = O-phospho-L-threonyl-[rhodopsin] + ADP + H(+). The enzyme catalyses L-seryl-[rhodopsin] + ATP = O-phospho-L-seryl-[rhodopsin] + ADP + H(+). Functionally, retina-specific kinase involved in the shutoff of the photoresponse and adaptation to changing light conditions via cone opsin phosphorylation, including rhodopsin (RHO). In Xenopus laevis (African clawed frog), this protein is Rhodopsin kinase grk7-b (grk7-b).